We begin with the raw amino-acid sequence, 630 residues long: PAN2-PAN3 deadenylation complex subunit PAN3 (630 aa).

The segment at 7 to 36 (SAKDTLCKNILIYGYCKFENKGCAFSHHKP) adopts a C3H1-type zinc-finger fold. Disordered regions lie at residues 38 to 72 (VGQPPVSASSSSGYSGNSSPAEAKRKFNLNTPSFQ) and 135 to 171 (GFGSEYPSSPNTSGAGQPPNPYLTGNGHPASMAQSSG). Low complexity predominate over residues 44–56 (SASSSSGYSGNSS). Polar residues predominate over residues 140–149 (YPSSPNTSGA). The tract at residues 231 to 501 (QTLPRSNLPE…LDRFSQRYLT (271 aa)) is pseudokinase domain. ATP-binding positions include Arg283, 333–340 (DYFPNSST), and 388–389 (TK). Positions 502 to 540 (TRLFSTINNLEDSTDFMESQITTELENARLFRLLTKLNF) form a coiled coil. Residues 541-630 (IIDRPEAKDW…DSVFRNLTRD (90 aa)) are knob domain.

The protein belongs to the protein kinase superfamily. PAN3 family. In terms of assembly, homodimer. Forms a heterotrimer with a catalytic subunit PAN2 to form the poly(A)-nuclease (PAN) deadenylation complex. Interacts (via PAM-2 motif) with poly(A)-binding protein PAB1 (via PABC domain), conferring substrate specificity of the enzyme complex.

The protein localises to the cytoplasm. Regulatory subunit of the poly(A)-nuclease (PAN) deadenylation complex, one of two cytoplasmic mRNA deadenylases involved in mRNA turnover. PAN specifically shortens poly(A) tails of RNA and the activity is stimulated by poly(A)-binding protein PAB1. PAN deadenylation is followed by rapid degradation of the shortened mRNA tails by the CCR4-NOT complex. Deadenylated mRNAs are then degraded by two alternative mechanisms, namely exosome-mediated 3'-5' exonucleolytic degradation, or deadenylation-dependent mRNA decaping and subsequent 5'-3' exonucleolytic degradation by XRN1. May also be involved in post-transcriptional maturation of mRNA poly(A) tails. PAN3 acts as a positive regulator for PAN activity, recruiting the catalytic subunit PAN2 to mRNA via its interaction with RNA and with PAB1. The protein is PAN2-PAN3 deadenylation complex subunit PAN3 of Scheffersomyces stipitis (strain ATCC 58785 / CBS 6054 / NBRC 10063 / NRRL Y-11545) (Yeast).